We begin with the raw amino-acid sequence, 284 residues long: Phosphonates import ATP-binding protein PhnC 2 (284 aa).

The ABC transporter domain maps to 5 to 253 (IEVRGLSKSF…MLRDLYGTEA (249 aa)). 38–45 (GASGSGKS) is a binding site for ATP.

The protein belongs to the ABC transporter superfamily. Phosphonates importer (TC 3.A.1.9.1) family. In terms of assembly, the complex is composed of two ATP-binding proteins (PhnC), two transmembrane proteins (PhnE) and a solute-binding protein (PhnD).

Its subcellular location is the cell inner membrane. The enzyme catalyses phosphonate(out) + ATP + H2O = phosphonate(in) + ADP + phosphate + H(+). Functionally, part of the ABC transporter complex PhnCDE involved in phosphonates import. Responsible for energy coupling to the transport system. This is Phosphonates import ATP-binding protein PhnC 2 from Cupriavidus necator (strain ATCC 17699 / DSM 428 / KCTC 22496 / NCIMB 10442 / H16 / Stanier 337) (Ralstonia eutropha).